We begin with the raw amino-acid sequence, 554 residues long: Calcium/calmodulin-dependent protein kinase type II delta 2 chain (554 aa).

Positions 13-271 constitute a Protein kinase domain; that stretch reads YQLFEELGKG…AAEAPKHPWI (259 aa). ATP is bound by residues 19 to 27 and lysine 42; that span reads LGKGAFSVV. The Proton acceptor role is filled by aspartate 135. Threonine 286 is modified (phosphothreonine). Phosphoserine is present on residues serine 314 and serine 318. 2 disordered regions span residues 324–375 and 392–413; these read PDGV…TIED and WQPS…SSVQ. Polar residues predominate over residues 330–340; the sequence is NNKTNLASSPK. Residue threonine 372 is modified to Phosphothreonine.

It belongs to the protein kinase superfamily. CAMK Ser/Thr protein kinase family. CaMK subfamily. In terms of assembly, CAMK2 is composed of four different chains: alpha, beta, gamma, and delta. The different isoforms assemble into homo- or heteromultimeric holoenzymes composed of 8 to 12 subunits. As to expression, first detected at 18 hpf. At 24 hpf, expressed in discrete anterior locations and along either side of the midline. At 48 hpf, expression is predominantly in the forebrain, and then accumulates in the forebrain, hindbrain, and retinal epithelium at 72 hpf.

It carries out the reaction L-seryl-[protein] + ATP = O-phospho-L-seryl-[protein] + ADP + H(+). The enzyme catalyses L-threonyl-[protein] + ATP = O-phospho-L-threonyl-[protein] + ADP + H(+). Its activity is regulated as follows. Autophosphorylation of CAMK2 plays an important role in the regulation of the kinase activity. Functionally, caM-kinase II (CAMK2) is a prominent kinase in the central nervous system. The protein is Calcium/calmodulin-dependent protein kinase type II delta 2 chain (camk2d2) of Danio rerio (Zebrafish).